Here is a 342-residue protein sequence, read N- to C-terminus: Trace amine-associated receptor 8 (342 aa).

Topologically, residues 1–31 are extracellular; the sequence is MTSNFSQPVVQLCYEDVNGSCIETPYSPGSR. 2 N-linked (GlcNAc...) asparagine glycosylation sites follow: Asn-4 and Asn-18. 2 disulfides stabilise this stretch: Cys-21-Cys-185 and Cys-104-Cys-189. Residues 32-52 traverse the membrane as a helical segment; sequence VILYTAFSFGSLLAVFGNLLV. The Cytoplasmic segment spans residues 53-67; sequence MTSVLHFKQLHSPTN. A helical membrane pass occupies residues 68–88; that stretch reads FLIASLACADFLVGVTVMLFS. The Extracellular segment spans residues 89–111; it reads MVRTVESCWYFGAKFCTLHSCCD. The helical transmembrane segment at 112–132 threads the bilayer; sequence VAFCYSSVLHLCFICIDRYIV. Over 133–146 the chain is Cytoplasmic; that stretch reads VTDPLVYATKFTVS. A helical membrane pass occupies residues 147–167; the sequence is VSGICISVSWILPLTYSGAVF. Residues 168–195 lie on the Extracellular side of the membrane; sequence YTGVNDDGLEELVSALNCVGGCQIIVSQ. The chain crosses the membrane as a helical span at residues 196-216; sequence GWVLIDFLLFFIPTLVMIILY. The Cytoplasmic segment spans residues 217 to 258; it reads SKIFLIAKQQAIKIETTSSKVESSSESYKIRVAKRERKAAKT. Residues 259 to 279 traverse the membrane as a helical segment; that stretch reads LGVTVLAFVISWLPYTVDILI. Asp-280 is a topological domain (extracellular). The chain crosses the membrane as a helical span at residues 281-301; that stretch reads AFMGFLTPAYIYEICCWSAYY. Residues 302–342 lie on the Cytoplasmic side of the membrane; that stretch reads NSAMNPLIYALFYPWFRKAIKLILSGDVLKASSSTISLFLE.

It belongs to the G-protein coupled receptor 1 family. In terms of tissue distribution, expressed in kidney and amygdala. Not expressed in other tissues or brain regions tested.

It is found in the cell membrane. Functionally, olfactory receptor specific for trace amines. Trace amine compounds are enriched in animal body fluids and act on trace amine-associated receptors (TAARs) to elicit both intraspecific and interspecific innate behaviors. Ligand-binding causes a conformation change that triggers signaling via G alpha proteins, possibly G(i)/G(o) G alpha proteins. The polypeptide is Trace amine-associated receptor 8 (TAAR8) (Homo sapiens (Human)).